The primary structure comprises 211 residues: Synaptosomal-associated protein 23 (211 aa).

The residue at position 1 (M1) is an N-acetylmethionine. Residues S5, S6, S20, S23, and S34 each carry the phosphoserine modification. The 63-residue stretch at 14–76 folds into the t-SNARE coiled-coil homology 1 domain; the sequence is HQITDESLES…RETEKTLTEL (63 aa). Residues 23–76 adopt a coiled-coil conformation; it reads STRRILGLAIESQDAGIKTITMLDEQKEQLNRIEEGLDQINKDMRETEKTLTEL. 5 S-palmitoyl cysteine lipidation sites follow: C79, C80, C83, C85, and C87. Position 110 is a phosphoserine (S110). A lipid anchor (S-palmitoyl cysteine) is attached at C112. Positions 146-208 constitute a t-SNARE coiled-coil homology 2 domain; the sequence is DAREDEMEEN…DIANARAKKL (63 aa). Phosphoserine is present on S161.

The protein belongs to the SNAP-25 family. As to quaternary structure, homotetramer (via coiled-coil domain), also forms heterotetramers with STX4 and VAMP3. Found in a complex with VAMP8 and STX1A. Found in a complex with VAMP8 and STX4 in pancreas. Interacts simultaneously with SNAPIN and SYN4. Interacts with STX1A. Interacts with STX12. Interacts tightly to multiple syntaxins and synaptobrevins/VAMPs. Interacts with ZDHHC13 (via ANK repeats). Interacts with ZDHHC17 (via ANK repeats). In terms of tissue distribution, ubiquitous. Highest levels where found in placenta.

The protein resides in the cell membrane. It is found in the synapse. It localises to the synaptosome. Its function is as follows. Essential component of the high affinity receptor for the general membrane fusion machinery and an important regulator of transport vesicle docking and fusion. This Homo sapiens (Human) protein is Synaptosomal-associated protein 23 (SNAP23).